A 265-amino-acid chain; its full sequence is Undecaprenyl-diphosphatase 1 (265 aa).

7 helical membrane passes run 4-24, 42-62, 84-104, 108-128, 184-204, 217-237, and 245-265; these read IIIA…PISS, AKTF…ILYH, FHVF…HDVI, LFQP…MIFA, SEFS…LDLL, MFAV…VTFL, and LKPF…FVLL.

Belongs to the UppP family.

It localises to the cell membrane. It catalyses the reaction di-trans,octa-cis-undecaprenyl diphosphate + H2O = di-trans,octa-cis-undecaprenyl phosphate + phosphate + H(+). Its function is as follows. Catalyzes the dephosphorylation of undecaprenyl diphosphate (UPP). Confers resistance to bacitracin. This Bacillus thuringiensis (strain Al Hakam) protein is Undecaprenyl-diphosphatase 1.